A 710-amino-acid chain; its full sequence is Chaperonin-containing T-complex member BBS12 (710 aa).

Belongs to the TCP-1 chaperonin family. BBS12 subfamily. Component of the chaperonin-containing T-complex (TRiC), a heterooligomeric complex of about 850 to 900 kDa that forms two stacked rings, 12 to 16 nm in diameter. Interacts with MKKS.

The protein resides in the cell projection. Its subcellular location is the cilium. Component of the chaperonin-containing T-complex (TRiC), a molecular chaperone complex that assists the folding of proteins upon ATP hydrolysis. As part of the TRiC complex may play a role in the assembly of BBSome, a complex involved in ciliogenesis regulating transports vesicles to the cilia. Involved in adipogenic differentiation. The protein is Chaperonin-containing T-complex member BBS12 (BBS12) of Pongo abelii (Sumatran orangutan).